The following is a 187-amino-acid chain: Phosphatidylethanolamine-binding protein 1 (187 aa).

Position 2 is an N-acetylalanine; in peptide hippocampal cholinergic neurostimulating (A2). 2 positions are modified to phosphoserine: S6 and S13. T42 bears the Phosphothreonine mark. 4 positions are modified to phosphoserine: S52, S54, S98, and S153. The interaction with RAF1 stretch occupies residues K93 to D134.

The protein belongs to the phosphatidylethanolamine-binding protein family. In terms of assembly, has a tendency to form dimers by disulfide cross-linking. Interacts with RAF1 and this interaction is enhanced if RAF1 is phosphorylated on residues 'Ser-338', 'Ser-339', 'Tyr-340' and 'Tyr-341'. Interacts with ALOX15; in response to IL13/interleukin-13, prevents the interaction of PEBP1 with RAF1 to activate the ERK signaling cascade. Major component of epididymal secretions and sperm plasma membranes. It is present in cytosols from a variety of other tissues. Highly expressed in brain.

Its subcellular location is the cytoplasm. The protein localises to the membrane. In terms of biological role, binds ATP, opioids and phosphatidylethanolamine. Has lower affinity for phosphatidylinositol and phosphatidylcholine. Serine protease inhibitor which inhibits thrombin, neuropsin and chymotrypsin but not trypsin, tissue type plasminogen activator and elastase. Inhibits the kinase activity of RAF1 by inhibiting its activation and by dissociating the RAF1/MEK complex and acting as a competitive inhibitor of MEK phosphorylation. Functionally, HCNP may be involved in the function of the presynaptic cholinergic neurons of the central nervous system. HCNP increases the production of choline acetyltransferase but not acetylcholinesterase. Seems to be mediated by a specific receptor. This chain is Phosphatidylethanolamine-binding protein 1 (Pebp1), found in Rattus norvegicus (Rat).